Here is a 746-residue protein sequence, read N- to C-terminus: tRNA (cytosine(34)-C(5))-methyltransferase (746 aa).

Positions 1-30 (MGRNQKQNFFAARKRQKRENGPKRTDRQAQ) are disordered. Positions 18–30 (RENGPKRTDRQAQ) are enriched in basic and acidic residues. S-adenosyl-L-methionine contacts are provided by residues 184–190 (CAAPGSK), Asp216, Asp243, and Asp270. Residue Cys323 is the Nucleophile of the active site. 2 disordered regions span residues 454 to 475 (QPAAEPQVDADGKPIEEKSVPW) and 701 to 746 (SAEA…VATS). Over residues 463 to 472 (ADGKPIEEKS) the composition is skewed to basic and acidic residues. The span at 704 to 714 (AEADSSGDGDA) shows a compositional bias: acidic residues. Over residues 731-746 (AETTGTPMDTEVVATS) the composition is skewed to polar residues.

Belongs to the class I-like SAM-binding methyltransferase superfamily. RsmB/NOP family. TRM4 subfamily. As to expression, ubiquitously expressed during embryonic development. Some enrichment is observed in the proventriculus area of the foregut and in the hindgut.

It localises to the nucleus. The protein localises to the nucleolus. It carries out the reaction cytidine(34) in tRNA precursor + S-adenosyl-L-methionine = 5-methylcytidine(34) in tRNA precursor + S-adenosyl-L-homocysteine + H(+). RNA methyltransferase that methylates tRNAs. Methylates cytosine to 5-methylcytosine (m5C) at position 34 of intron-containing tRNA(Leu)(CAA) precursors. Required for short-term memory. The chain is tRNA (cytosine(34)-C(5))-methyltransferase from Drosophila melanogaster (Fruit fly).